A 168-amino-acid polypeptide reads, in one-letter code: Lipoprotein signal peptidase (168 aa).

2 consecutive transmembrane segments (helical) span residues 57–77 and 86–106; these read PKEV…LYVF and FILP…DRIT. Catalysis depends on residues aspartate 112 and aspartate 138. The chain crosses the membrane as a helical span at residues 131 to 151; sequence WPIFNIADSAITIGACLLILF.

This sequence belongs to the peptidase A8 family.

Its subcellular location is the cell inner membrane. It carries out the reaction Release of signal peptides from bacterial membrane prolipoproteins. Hydrolyzes -Xaa-Yaa-Zaa-|-(S,diacylglyceryl)Cys-, in which Xaa is hydrophobic (preferably Leu), and Yaa (Ala or Ser) and Zaa (Gly or Ala) have small, neutral side chains.. The protein operates within protein modification; lipoprotein biosynthesis (signal peptide cleavage). In terms of biological role, this protein specifically catalyzes the removal of signal peptides from prolipoproteins. The chain is Lipoprotein signal peptidase from Chlorobium phaeobacteroides (strain DSM 266 / SMG 266 / 2430).